Consider the following 138-residue polypeptide: Large ribosomal subunit protein uL14m (138 aa).

The protein belongs to the universal ribosomal protein uL14 family. In terms of assembly, component of the mitochondrial large ribosomal subunit (mt-LSU). Mature yeast 74S mitochondrial ribosomes consist of a small (37S) and a large (54S) subunit. The 37S small subunit contains a 15S ribosomal RNA (15S mt-rRNA) and 34 different proteins. The 54S large subunit contains a 21S rRNA (21S mt-rRNA) and 46 different proteins.

It is found in the mitochondrion. Functionally, component of the mitochondrial ribosome (mitoribosome), a dedicated translation machinery responsible for the synthesis of mitochondrial genome-encoded proteins, including at least some of the essential transmembrane subunits of the mitochondrial respiratory chain. The mitoribosomes are attached to the mitochondrial inner membrane and translation products are cotranslationally integrated into the membrane. This Saccharomyces cerevisiae (strain ATCC 204508 / S288c) (Baker's yeast) protein is Large ribosomal subunit protein uL14m (MRPL38).